Consider the following 692-residue polypeptide: MTMIRKEVDFGGRRLQLETGRMARQADGAVLVSSGDTVVLVTAVGRREMKPGQDFFPLTVNYQEKAYAAGKIPGGFFKREGRPTEKETLTSRLIDRPIRPLFPKGFMNEVQVIATVVSVDRDNDPDILALVGASAALAVSGIPFNGPIGAARVAYIDGKYVLNPSYAQLTTSQLDLVVAGTRQAVLMVESEAQQLSEEIMLEAVMFGHAQFQPVIETIEALAREAGKPRWEWVAPVADEALGVQVREKATPLLQEAYALTEKQARSKRLEDVQQAMAVEFGSDDAGRGDMVRGLLKKIETGIVRGRILDGAPRIDGRDSKTVRPITIEAGVLPRTHGSALFTRGETQALVVATLGTKGDEQIIDALQGESRDRFMLHYNFPPFSTGETGMVGSPKRREIGHGRLAKRAIAAVLPTDSEFPYSLRVVSEVLESNGSSSMATVCGASLALMDAGVPLKAPVAGVAMGLIKEGARFAVLTDILGDEDHLGDMDFKVAGTEQGVTALQMDIKIDGITREIMAQALQQALAGRLHILGLMNGVLSRGRGELSDYAPRIITIQINPDRIRDVIGPGGKVIRALTEETGATIDIQDNGTVTIASVDGEAGAAAKRRIELLTADVQVDTIYDGKVAKIMDFGAFVTILPGRDGLLHISQISNERVSDVHDHLKEGQAVRVKVLEVDRQGKIKLSMKDIPQ.

Mg(2+) contacts are provided by Asp-484 and Asp-490. Residues 551-610 (PRIITIQINPDRIRDVIGPGGKVIRALTEETGATIDIQDNGTVTIASVDGEAGAAAKRRI) enclose the KH domain. The region spanning 620-688 (DTIYDGKVAK…RQGKIKLSMK (69 aa)) is the S1 motif domain.

Belongs to the polyribonucleotide nucleotidyltransferase family. As to quaternary structure, component of the RNA degradosome, which is a multiprotein complex involved in RNA processing and mRNA degradation. The cofactor is Mg(2+).

It is found in the cytoplasm. It carries out the reaction RNA(n+1) + phosphate = RNA(n) + a ribonucleoside 5'-diphosphate. In terms of biological role, involved in mRNA degradation. Catalyzes the phosphorolysis of single-stranded polyribonucleotides processively in the 3'- to 5'-direction. The protein is Polyribonucleotide nucleotidyltransferase of Acidithiobacillus ferrooxidans (strain ATCC 53993 / BNL-5-31) (Leptospirillum ferrooxidans (ATCC 53993)).